Reading from the N-terminus, the 81-residue chain is Large ribosomal subunit protein eL31 (81 aa).

Belongs to the eukaryotic ribosomal protein eL31 family.

This Methanothermobacter thermautotrophicus (strain ATCC 29096 / DSM 1053 / JCM 10044 / NBRC 100330 / Delta H) (Methanobacterium thermoautotrophicum) protein is Large ribosomal subunit protein eL31 (rpl31e).